The primary structure comprises 275 residues: Probable endonuclease lcl3 (275 aa).

A disordered region spans residues 1 to 25; sequence MRWPPWASNTQASNNDHPTTTNNND. Residues 14 to 25 show a composition bias toward low complexity; it reads NNDHPTTTNNND. The helical transmembrane segment at 41–57 threads the bilayer; it reads LIPTLVLTTGILSAFTL. Positions 79 to 247 constitute a TNase-like domain; it reads RSILGKVTSV…KARGLGLWKG (169 aa). R130 is an active-site residue. Residue D135 coordinates Ca(2+). Active-site residues include E138 and R178.

The protein belongs to the LCL3 family.

It is found in the mitochondrion. The protein localises to the membrane. This is Probable endonuclease lcl3 (lcl3) from Aspergillus niger (strain ATCC MYA-4892 / CBS 513.88 / FGSC A1513).